The chain runs to 302 residues: Sulfate adenylyltransferase subunit 2 (302 aa).

Positions 280–302 (RQGRLIDSDQSASMEQKKRQGYF) are disordered.

Belongs to the PAPS reductase family. CysD subfamily. Heterodimer composed of CysD, the smaller subunit, and CysN.

The catalysed reaction is sulfate + ATP + H(+) = adenosine 5'-phosphosulfate + diphosphate. It participates in sulfur metabolism; hydrogen sulfide biosynthesis; sulfite from sulfate: step 1/3. With CysN forms the ATP sulfurylase (ATPS) that catalyzes the adenylation of sulfate producing adenosine 5'-phosphosulfate (APS) and diphosphate, the first enzymatic step in sulfur assimilation pathway. APS synthesis involves the formation of a high-energy phosphoric-sulfuric acid anhydride bond driven by GTP hydrolysis by CysN coupled to ATP hydrolysis by CysD. This Shewanella baltica (strain OS185) protein is Sulfate adenylyltransferase subunit 2.